A 248-amino-acid polypeptide reads, in one-letter code: Putative TrmH family tRNA/rRNA methyltransferase (248 aa).

S-adenosyl-L-methionine is bound by residues Gly196, Ile216, and Leu225.

This sequence belongs to the class IV-like SAM-binding methyltransferase superfamily. RNA methyltransferase TrmH family.

The protein is Putative TrmH family tRNA/rRNA methyltransferase of Staphylococcus aureus (strain Mu50 / ATCC 700699).